A 328-amino-acid chain; its full sequence is L-lactate dehydrogenase (328 aa).

Residues V18, E39, K46, Y71, and 85–86 (GA) each bind NAD(+). Q88 and R94 together coordinate substrate. NAD(+) is bound by residues S107, 124–126 (AAN), and S149. 126-129 (NPVD) contributes to the substrate binding site. 154 to 157 (DSAR) contributes to the substrate binding site. Residues R159 and H174 each coordinate beta-D-fructose 1,6-bisphosphate. H181 (proton acceptor) is an active-site residue. Y226 is modified (phosphotyrosine). T235 contributes to the substrate binding site.

The protein belongs to the LDH/MDH superfamily. LDH family. In terms of assembly, homotetramer.

It is found in the cytoplasm. It catalyses the reaction (S)-lactate + NAD(+) = pyruvate + NADH + H(+). It functions in the pathway fermentation; pyruvate fermentation to lactate; (S)-lactate from pyruvate: step 1/1. Allosterically activated by fructose 1,6-bisphosphate (FBP). Its function is as follows. Catalyzes the conversion of lactate to pyruvate. The sequence is that of L-lactate dehydrogenase from Streptococcus pneumoniae (strain 70585).